We begin with the raw amino-acid sequence, 573 residues long: Proline--tRNA ligase (573 aa).

It belongs to the class-II aminoacyl-tRNA synthetase family. ProS type 1 subfamily. As to quaternary structure, homodimer.

Its subcellular location is the cytoplasm. The catalysed reaction is tRNA(Pro) + L-proline + ATP = L-prolyl-tRNA(Pro) + AMP + diphosphate. Catalyzes the attachment of proline to tRNA(Pro) in a two-step reaction: proline is first activated by ATP to form Pro-AMP and then transferred to the acceptor end of tRNA(Pro). As ProRS can inadvertently accommodate and process non-cognate amino acids such as alanine and cysteine, to avoid such errors it has two additional distinct editing activities against alanine. One activity is designated as 'pretransfer' editing and involves the tRNA(Pro)-independent hydrolysis of activated Ala-AMP. The other activity is designated 'posttransfer' editing and involves deacylation of mischarged Ala-tRNA(Pro). The misacylated Cys-tRNA(Pro) is not edited by ProRS. The sequence is that of Proline--tRNA ligase from Elusimicrobium minutum (strain Pei191).